Reading from the N-terminus, the 520-residue chain is MWRQSRWNEPLITEMSRRGRRGALPPRPDEKVVKEVGPLKLPQSLARGSPPSLPEVSEVEVVRHYTRLSQMAYGVDNGPVPLGSCTMKYNPRVAARLAFDPRLETLHPLQDDETVQGVLEAIYMVQEWLRHITGMDACTVHPAAGSQGELAGVLMIKRFHEMRGDLDKRRVIIVPDSAHGTNPASAAMGGFQVVEVPTGDDGNVDMEALKAAVGGDTAGLMITNPSTLGLFEENILEISRLVHEAGGLLYYDGANLNGIIGRARPGDMEFDIAHVNLHKTFSVPHGGGGPGSGPVCVKRVEVVDGVTLEDLLPGPRVVYSREEGLYRVRPPGRWSVGRLRAWIANTLAVLWAYAYILAMGPQGLRLAGEVSVVNTNYFIRLMEGHWGYSLPYAPSRPRKHEVVLSAKPLKRETGATAEDVAKGLLDAGLYAPTIYFPLIVEEALMIEFTESETKENIEAYAARLKEIAEEARRDPSTPRKWPRNTTSARVDNVRANHPRTVTPTWRVEVLRRQGKLGPLR.

Residues 1–29 (MWRQSRWNEPLITEMSRRGRRGALPPRPD) are disordered. At lysine 279 the chain carries N6-(pyridoxal phosphate)lysine.

This sequence belongs to the GcvP family. C-terminal subunit subfamily. As to quaternary structure, the glycine cleavage system is composed of four proteins: P, T, L and H. In this organism, the P 'protein' is a heterodimer of two subunits. It depends on pyridoxal 5'-phosphate as a cofactor.

It catalyses the reaction N(6)-[(R)-lipoyl]-L-lysyl-[glycine-cleavage complex H protein] + glycine + H(+) = N(6)-[(R)-S(8)-aminomethyldihydrolipoyl]-L-lysyl-[glycine-cleavage complex H protein] + CO2. Functionally, the glycine cleavage system catalyzes the degradation of glycine. The P protein binds the alpha-amino group of glycine through its pyridoxal phosphate cofactor; CO(2) is released and the remaining methylamine moiety is then transferred to the lipoamide cofactor of the H protein. The protein is Probable glycine dehydrogenase (decarboxylating) subunit 2 of Aeropyrum pernix (strain ATCC 700893 / DSM 11879 / JCM 9820 / NBRC 100138 / K1).